The sequence spans 141 residues: Large ribosomal subunit protein uL11 (141 aa).

Belongs to the universal ribosomal protein uL11 family. As to quaternary structure, part of the ribosomal stalk of the 50S ribosomal subunit. Interacts with L10 and the large rRNA to form the base of the stalk. L10 forms an elongated spine to which L12 dimers bind in a sequential fashion forming a multimeric L10(L12)X complex. In terms of processing, one or more lysine residues are methylated.

Forms part of the ribosomal stalk which helps the ribosome interact with GTP-bound translation factors. The chain is Large ribosomal subunit protein uL11 from Clostridium acetobutylicum (strain ATCC 824 / DSM 792 / JCM 1419 / IAM 19013 / LMG 5710 / NBRC 13948 / NRRL B-527 / VKM B-1787 / 2291 / W).